Reading from the N-terminus, the 104-residue chain is Large ribosomal subunit protein uL24 (104 aa).

This sequence belongs to the universal ribosomal protein uL24 family. In terms of assembly, part of the 50S ribosomal subunit.

One of two assembly initiator proteins, it binds directly to the 5'-end of the 23S rRNA, where it nucleates assembly of the 50S subunit. In terms of biological role, one of the proteins that surrounds the polypeptide exit tunnel on the outside of the subunit. In Rhodopseudomonas palustris (strain BisB18), this protein is Large ribosomal subunit protein uL24.